We begin with the raw amino-acid sequence, 250 residues long: Ubiquinone/menaquinone biosynthesis C-methyltransferase UbiE (250 aa).

S-adenosyl-L-methionine is bound by residues Thr-73, Asp-94, 122–123, and Ser-139; that span reads NS.

It belongs to the class I-like SAM-binding methyltransferase superfamily. MenG/UbiE family.

The enzyme catalyses a 2-demethylmenaquinol + S-adenosyl-L-methionine = a menaquinol + S-adenosyl-L-homocysteine + H(+). It catalyses the reaction a 2-methoxy-6-(all-trans-polyprenyl)benzene-1,4-diol + S-adenosyl-L-methionine = a 5-methoxy-2-methyl-3-(all-trans-polyprenyl)benzene-1,4-diol + S-adenosyl-L-homocysteine + H(+). It participates in quinol/quinone metabolism; menaquinone biosynthesis; menaquinol from 1,4-dihydroxy-2-naphthoate: step 2/2. It functions in the pathway cofactor biosynthesis; ubiquinone biosynthesis. Functionally, methyltransferase required for the conversion of demethylmenaquinol (DMKH2) to menaquinol (MKH2) and the conversion of 2-polyprenyl-6-methoxy-1,4-benzoquinol (DDMQH2) to 2-polyprenyl-3-methyl-6-methoxy-1,4-benzoquinol (DMQH2). The polypeptide is Ubiquinone/menaquinone biosynthesis C-methyltransferase UbiE (Wigglesworthia glossinidia brevipalpis).